A 189-amino-acid polypeptide reads, in one-letter code: Probable chorismate pyruvate-lyase (189 aa).

Residues Arg77, Leu115, and Glu174 each coordinate substrate.

This sequence belongs to the UbiC family.

The protein resides in the cytoplasm. It catalyses the reaction chorismate = 4-hydroxybenzoate + pyruvate. The protein operates within cofactor biosynthesis; ubiquinone biosynthesis. In terms of biological role, removes the pyruvyl group from chorismate, with concomitant aromatization of the ring, to provide 4-hydroxybenzoate (4HB) for the ubiquinone pathway. The chain is Probable chorismate pyruvate-lyase from Shewanella sp. (strain MR-7).